Consider the following 150-residue polypeptide: UPF0506 protein SJCHGC09643 (150 aa).

The N-terminal stretch at 1–18 (MNTCIQLLILCLVTVINS) is a signal peptide. Residues Asn20, Asn32, Asn48, and Asn110 are each glycosylated (N-linked (GlcNAc...) asparagine). 3 cysteine pairs are disulfide-bonded: Cys116–Cys130, Cys123–Cys134, and Cys129–Cys139.

The protein belongs to the UPF0506 family.

It is found in the secreted. In Schistosoma japonicum (Blood fluke), this protein is UPF0506 protein SJCHGC09643.